Reading from the N-terminus, the 152-residue chain is Large ribosomal subunit protein bL9 (152 aa).

The protein belongs to the bacterial ribosomal protein bL9 family.

Binds to the 23S rRNA. This Streptococcus thermophilus (strain CNRZ 1066) protein is Large ribosomal subunit protein bL9.